The following is a 597-amino-acid chain: NADPH-dependent diflavin oxidoreductase 1 (597 aa).

Residues 6–150 (LLVLFGSQTG…AVDPWLRDLW (145 aa)) form the Flavodoxin-like domain. Residues 12 to 17 (SQTGTA), 59 to 62 (ATTG), 97 to 106 (LGDSSYAKFN), and D132 each bind FMN. A disordered region spans residues 188-207 (GSEGQRVAHPGSQEPPSESK). In terms of domain architecture, FAD-binding FR-type spans 206-447 (SKPFLAPMIS…VRPGSLAFPE (242 aa)). Residues R350, 382-385 (RAFS), and 416-419 (GLCS) contribute to the FAD site. Residues T460, 515–516 (SR), 521–525 (KVYVQ), and D558 contribute to the NADP(+) site. W596 provides a ligand contact to FAD.

Belongs to the NADPH-dependent diflavin oxidoreductase NDOR1 family. This sequence in the N-terminal section; belongs to the flavodoxin family. It in the C-terminal section; belongs to the flavoprotein pyridine nucleotide cytochrome reductase family. As to quaternary structure, interacts with CIAPIN1; as part of the cytosolic iron-sulfur (Fe-S) protein assembly (CIA) machinery. Interacts with DCPS. FAD is required as a cofactor. FMN serves as cofactor. In terms of tissue distribution, low expression in brain, heart, kidney, pancreas, prostate and skeletal muscle. Highest levels in the placenta. Expressed in cancer cell lines including promyelocytic leukemia, HeLaS3, chronic myelagenous leukemia, lymphoblastic leukemia, Burkitt's lymphoma, colorectal adenocarcinoma, lung carcinoma, and melanoma G-361.

It is found in the cytoplasm. The protein localises to the perinuclear region. It carries out the reaction 2 oxidized [2Fe-2S]-[protein] + NADPH = 2 reduced [2Fe-2S]-[protein] + NADP(+) + H(+). Functionally, NADPH-dependent reductase which is a central component of the cytosolic iron-sulfur (Fe-S) protein assembly (CIA) machinery. Transfers electrons from NADPH via its FAD and FMN prosthetic groups to the [2Fe-2S] cluster of CIAPIN1, another key component of the CIA machinery. In turn, this reduced cluster provides electrons for assembly of cytosolic iron-sulfur cluster proteins. It can also reduce the [2Fe-2S] cluster of CISD1 and activate this protein implicated in Fe/S cluster repair. In vitro can fully activate methionine synthase/MTR in the presence of soluble cytochrome b5/CYB5A. This chain is NADPH-dependent diflavin oxidoreductase 1, found in Homo sapiens (Human).